A 137-amino-acid chain; its full sequence is MEQTLSIIKPDAVKKGVIGKIIDRFESNNLRICAMKKLQLTRCDAEAFYAIHKERPFFKDLVDFMISGPVVVMVLEGNNAVMKNRDLMGATNPKEAEAGTIRADFAQSIDANAVHGSDSLENAKNEIAFFFSTREIC.

Positions 9, 57, 85, 91, 102, and 112 each coordinate ATP. His115 functions as the Pros-phosphohistidine intermediate in the catalytic mechanism.

It belongs to the NDK family. In terms of assembly, homotetramer. Requires Mg(2+) as cofactor.

The protein resides in the cytoplasm. The enzyme catalyses a 2'-deoxyribonucleoside 5'-diphosphate + ATP = a 2'-deoxyribonucleoside 5'-triphosphate + ADP. It catalyses the reaction a ribonucleoside 5'-diphosphate + ATP = a ribonucleoside 5'-triphosphate + ADP. Functionally, major role in the synthesis of nucleoside triphosphates other than ATP. The ATP gamma phosphate is transferred to the NDP beta phosphate via a ping-pong mechanism, using a phosphorylated active-site intermediate. This is Nucleoside diphosphate kinase from Helicobacter hepaticus (strain ATCC 51449 / 3B1).